A 232-amino-acid chain; its full sequence is Large ribosomal subunit protein uL1 (232 aa).

This sequence belongs to the universal ribosomal protein uL1 family. As to quaternary structure, part of the 50S ribosomal subunit.

Its function is as follows. Binds directly to 23S rRNA. The L1 stalk is quite mobile in the ribosome, and is involved in E site tRNA release. In terms of biological role, protein L1 is also a translational repressor protein, it controls the translation of the L11 operon by binding to its mRNA. In Bacillus cereus (strain ATCC 14579 / DSM 31 / CCUG 7414 / JCM 2152 / NBRC 15305 / NCIMB 9373 / NCTC 2599 / NRRL B-3711), this protein is Large ribosomal subunit protein uL1.